The chain runs to 1913 residues: Protein TIC 214 (1913 aa).

5 helical membrane passes run 18–38 (IINS…FSIG), 64–84 (FITG…HLAL), 124–144 (LSIQ…HLML), 172–192 (VGWL…VSWI), and 214–234 (LKSA…VNYL). Disordered regions lie at residues 245–330 (KLNE…ETEE), 707–734 (YTDK…NSDT), and 1605–1652 (EKED…RKKK). The span at 260–289 (KESQKSKESEEERDVEKETTSETKETKQEQ) shows a compositional bias: basic and acidic residues. The segment covering 303-314 (EKEDPDKIDETE) has biased composition (acidic residues). Residues 315–330 (EIRVNGKEKKKDETEE) show a composition bias toward basic and acidic residues. Low complexity predominate over residues 718–729 (PNPNTDNTTTEN).

This sequence belongs to the TIC214 family. Part of the Tic complex.

The protein resides in the plastid. It is found in the chloroplast inner membrane. In terms of biological role, involved in protein precursor import into chloroplasts. May be part of an intermediate translocation complex acting as a protein-conducting channel at the inner envelope. This chain is Protein TIC 214, found in Acorus calamus var. americanus (American sweet flag).